The following is a 363-amino-acid chain: Spermidine/putrescine import ATP-binding protein PotA (363 aa).

The region spanning 6-236 is the ABC transporter domain; that stretch reads LEIRNVTRRF…PRSRFVADFI (231 aa). 38 to 45 is a binding site for ATP; that stretch reads GPSGCGKT.

The protein belongs to the ABC transporter superfamily. Spermidine/putrescine importer (TC 3.A.1.11.1) family. In terms of assembly, the complex is composed of two ATP-binding proteins (PotA), two transmembrane proteins (PotB and PotC) and a solute-binding protein (PotD).

The protein localises to the cell inner membrane. The enzyme catalyses ATP + H2O + polyamine-[polyamine-binding protein]Side 1 = ADP + phosphate + polyamineSide 2 + [polyamine-binding protein]Side 1.. Part of the ABC transporter complex PotABCD involved in spermidine/putrescine import. Responsible for energy coupling to the transport system. The sequence is that of Spermidine/putrescine import ATP-binding protein PotA from Pseudomonas aeruginosa (strain UCBPP-PA14).